The chain runs to 185 residues: Ribonuclease HII (185 aa).

The 185-residue stretch at 1 to 185 (MIILGIDEAG…KSYKPIQLLL (185 aa)) folds into the RNase H type-2 domain. Residues D7, E8, and D99 each contribute to the a divalent metal cation site.

Belongs to the RNase HII family. Mn(2+) serves as cofactor. It depends on Mg(2+) as a cofactor.

It is found in the cytoplasm. The catalysed reaction is Endonucleolytic cleavage to 5'-phosphomonoester.. In terms of biological role, endonuclease that specifically degrades the RNA of RNA-DNA hybrids. The protein is Ribonuclease HII of Francisella philomiragia subsp. philomiragia (strain ATCC 25017 / CCUG 19701 / FSC 153 / O#319-036).